We begin with the raw amino-acid sequence, 175 residues long: Adenine phosphoribosyltransferase (175 aa).

It belongs to the purine/pyrimidine phosphoribosyltransferase family. In terms of assembly, homodimer.

The protein resides in the cytoplasm. The enzyme catalyses AMP + diphosphate = 5-phospho-alpha-D-ribose 1-diphosphate + adenine. It participates in purine metabolism; AMP biosynthesis via salvage pathway; AMP from adenine: step 1/1. Catalyzes a salvage reaction resulting in the formation of AMP, that is energically less costly than de novo synthesis. The sequence is that of Adenine phosphoribosyltransferase from Synechococcus sp. (strain JA-3-3Ab) (Cyanobacteria bacterium Yellowstone A-Prime).